The primary structure comprises 286 residues: CDP-diacylglycerol--serine O-phosphatidyltransferase (286 aa).

The next 6 membrane-spanning stretches (helical) occupy residues 15-35 (ILPS…IKFA), 74-94 (IDSL…LYVS), 95-115 (MLSK…CVVL), 135-155 (EFFV…LLAL), 167-187 (GWFL…GIPM), and 207-227 (LAIC…VIII).

It belongs to the CDP-alcohol phosphatidyltransferase class-I family.

It is found in the cell membrane. It carries out the reaction a CDP-1,2-diacyl-sn-glycerol + L-serine = a 1,2-diacyl-sn-glycero-3-phospho-L-serine + CMP + H(+). This chain is CDP-diacylglycerol--serine O-phosphatidyltransferase (pssA), found in Mycobacterium tuberculosis (strain ATCC 25618 / H37Rv).